The primary structure comprises 574 residues: Aspartate--tRNA ligase (574 aa).

Glu-172 lines the L-aspartate pocket. The tract at residues 196–199 is aspartate; sequence QIFK. Arg-218 contacts L-aspartate. ATP-binding positions include 218–220 and Gln-227; that span reads RDE. His-453 contributes to the L-aspartate binding site. Glu-487 contacts ATP. Arg-494 contacts L-aspartate. ATP is bound at residue 539–542; that stretch reads GLDR.

Belongs to the class-II aminoacyl-tRNA synthetase family. Type 1 subfamily. As to quaternary structure, homodimer.

It localises to the cytoplasm. The catalysed reaction is tRNA(Asp) + L-aspartate + ATP = L-aspartyl-tRNA(Asp) + AMP + diphosphate. Catalyzes the attachment of L-aspartate to tRNA(Asp) in a two-step reaction: L-aspartate is first activated by ATP to form Asp-AMP and then transferred to the acceptor end of tRNA(Asp). The sequence is that of Aspartate--tRNA ligase from Blochmanniella pennsylvanica (strain BPEN).